The chain runs to 430 residues: Signal recognition particle receptor FtsY (430 aa).

Residues 75–95 (DTGELPAVGDDATVPRDSPRH) form a disordered region. Residues 238 to 245 (GVNGTGKT), 320 to 324 (DTAGR), and 382 to 385 (TKLD) each bind GTP.

The protein belongs to the GTP-binding SRP family. FtsY subfamily. As to quaternary structure, part of the signal recognition particle protein translocation system, which is composed of SRP and FtsY.

It is found in the cell membrane. The protein resides in the cytoplasm. The catalysed reaction is GTP + H2O = GDP + phosphate + H(+). Involved in targeting and insertion of nascent membrane proteins into the cytoplasmic membrane. Acts as a receptor for the complex formed by the signal recognition particle (SRP) and the ribosome-nascent chain (RNC). The sequence is that of Signal recognition particle receptor FtsY from Mycobacterium leprae (strain TN).